The primary structure comprises 194 residues: MRQATIKRETKETQIEISLNLDEQSGIEIDTGIGFLNHMLNLFAKHGRFGLVVKCHGDLDVDPHHTTEDTGIVLGECFKQALGDKQGIERYGTEFVPMDETLGQVSVDLSGRSYLVFDAELTNPRLGGLDTETVEDFFQAVAFAAEMNLHARILYGRNTHHKVESLFKAFGRAMRAAVTINPDIQGVNSTKGVI.

This sequence belongs to the imidazoleglycerol-phosphate dehydratase family.

The protein localises to the cytoplasm. It carries out the reaction D-erythro-1-(imidazol-4-yl)glycerol 3-phosphate = 3-(imidazol-4-yl)-2-oxopropyl phosphate + H2O. It participates in amino-acid biosynthesis; L-histidine biosynthesis; L-histidine from 5-phospho-alpha-D-ribose 1-diphosphate: step 6/9. This chain is Imidazoleglycerol-phosphate dehydratase, found in Lactiplantibacillus plantarum (strain ATCC BAA-793 / NCIMB 8826 / WCFS1) (Lactobacillus plantarum).